Here is a 666-residue protein sequence, read N- to C-terminus: Probable potassium transport system protein Kup (666 aa).

A run of 12 helical transmembrane segments spans residues 16–36 (GFIIALGIVYGDIGTSPLYTI), 58–78 (ISLIIWTLTLITTIKYVLIAL), 100–120 (PWLIIPAMIGGATLLSDGALT), 141–161 (IYQNQTNVIITTLVILIVLFG), 165–185 (FGTGFIGKIFGPVMFIWFSFL), 221–241 (IFILGSIFLATTGAEALYSDL), 253–273 (WPFVKMCIVLSYCGQAAWILA), 294–314 (VYLVSLATLAAIIASQALISG), 343–363 (LYIPVINWILFAVTSCTVLAF), 373–393 (YGLAITITMLMTTILLKYYLI), 399–419 (PILAHLVMAFFALVEFIFFLA), and 424–444 (FMHGGYAVVILALAIVFVMFI).

The protein belongs to the HAK/KUP transporter (TC 2.A.72) family.

Its subcellular location is the cell membrane. The catalysed reaction is K(+)(in) + H(+)(in) = K(+)(out) + H(+)(out). Transport of potassium into the cell. Likely operates as a K(+):H(+) symporter. The protein is Probable potassium transport system protein Kup of Streptococcus pyogenes serotype M1.